We begin with the raw amino-acid sequence, 108 residues long: Urease subunit beta (108 aa).

This sequence belongs to the urease beta subunit family. As to quaternary structure, heterotrimer of UreA (gamma), UreB (beta) and UreC (alpha) subunits. Three heterotrimers associate to form the active enzyme.

Its subcellular location is the cytoplasm. The catalysed reaction is urea + 2 H2O + H(+) = hydrogencarbonate + 2 NH4(+). The protein operates within nitrogen metabolism; urea degradation; CO(2) and NH(3) from urea (urease route): step 1/1. This Trichormus variabilis (strain ATCC 29413 / PCC 7937) (Anabaena variabilis) protein is Urease subunit beta.